The primary structure comprises 379 residues: Stimulator of interferon genes protein (379 aa).

The next 3 helical transmembrane spans lie at 20–40 (VAAF…GEPS), 87–107 (ACLG…YFYV), and 115–135 (LPLT…ILLG). S-palmitoyl cysteine attachment occurs at residues Cys-88 and Cys-91. Positions 153–340 (FNVAHGLAWS…KHLRQEEREE (188 aa)) are cyclic dinucleotide-binding domain (CBD). 4 residues coordinate 2',3'-cGAMP: Ser-162, Tyr-167, Arg-238, and Thr-263. Residues Ser-162, Tyr-167, 238 to 241 (RVYT), and Thr-263 each bind 3',3'-c-di-GMP. 2',3'-cUAMP is bound by residues Tyr-167, Arg-238, and Thr-263. The segment at 340–379 (EVTMGTAGTFVAPGSSTLHQEPELLISGMDQPLPLRTDIF) is C-terminal tail (CTT). Phosphoserine is present on Ser-355. A Phosphothreonine modification is found at Thr-356. The pLxIS motif motif lies at 363–366 (LLIS). A Phosphoserine; by TBK1 modification is found at Ser-366.

It belongs to the STING family. Homodimer; forms a homodimer in absence of cyclic nucleotide (c-di-GMP or cGAMP). Homotetramer; in presence of cyclic nucleotide (c-di-GMP or cGAMP), forms tetramers and higher-order oligomers through side-by-side packing. Interacts (when phosphorylated) with IRF3; following activation and phosphorylation on the pLxIS motif by TBK1, recruits IRF3. Interacts with TBK1; when homodimer, leading to subsequent production of IFN-beta. Interacts (via transmembrane domain) with TMEM203. In terms of processing, phosphorylation by TBK1 leads to activation and production of IFN-beta. Following cyclic nucleotide (c-di-GMP or cGAMP)-binding, activation and translocation from the endoplasmic reticulum, STING1 is phosphorylated by TBK1 at Ser-366 in the pLxIS motif. The phosphorylated pLxIS motif constitutes an IRF3-binding motif, leading to recruitment of the transcription factor IRF3 to induce type-I interferons and other cytokines. In contrast, lacks phosphorylation site at position 358, leading to reduced production of type-I interferons and other cytokines.

The protein localises to the endoplasmic reticulum membrane. Its subcellular location is the cytoplasm. The protein resides in the perinuclear region. It localises to the endoplasmic reticulum-Golgi intermediate compartment membrane. It is found in the golgi apparatus membrane. The protein localises to the cytoplasmic vesicle. Its subcellular location is the autophagosome membrane. The protein resides in the mitochondrion outer membrane. It localises to the cell membrane. It catalyses the reaction H(+)(in) = H(+)(out). In terms of biological role, facilitator of innate immune signaling that acts as a sensor of cytosolic DNA from bacteria and viruses and promotes low production of type I interferon (IFN-alpha and IFN-beta). Compared to other mammals, STING1-dependent type I interferon induction is strongly reduced in bats, suggesting that the cGAS-STING pathway promotes a limited inflammatory response. Innate immune response is triggered in response to non-CpG double-stranded DNA from viruses and bacteria delivered to the cytoplasm. Acts by binding cyclic dinucleotides: recognizes and binds cyclic di-GMP (c-di-GMP), a second messenger produced by bacteria, cyclic UMP-AMP (2',3'-cUAMP), and cyclic GMP-AMP (cGAMP), a messenger produced by CGAS in response to DNA virus in the cytosol. Upon binding to c-di-GMP, cUAMP or cGAMP, STING1 oligomerizes, translocates from the endoplasmic reticulum and is phosphorylated by TBK1 on the pLxIS motif, leading to recruitment and subsequent activation of the transcription factor IRF3 to induce expression of type I interferon and exert a potent anti-viral state. In addition to promote the production of type I interferons, plays a direct role in autophagy. Following cGAMP-binding, STING1 buds from the endoplasmic reticulum into COPII vesicles, which then form the endoplasmic reticulum-Golgi intermediate compartment (ERGIC). The ERGIC serves as the membrane source for WIPI2 recruitment and LC3 lipidation, leading to formation of autophagosomes that target cytosolic DNA or DNA viruses for degradation by the lysosome. Promotes autophagy by acting as a proton channel that directs proton efflux from the Golgi to facilitate MAP1LC3B/LC3B lipidation. The autophagy- and interferon-inducing activities can be uncoupled and autophagy induction is independent of TBK1 phosphorylation. In Eidolon helvum (Straw-colored fruit bat), this protein is Stimulator of interferon genes protein.